A 630-amino-acid chain; its full sequence is Kelch-like protein 14 (630 aa).

The region spanning 33-153 is the BTB domain; the sequence is CDVTLTAQGQ…LYTANVTLSL (121 aa). The segment at 69 to 117 is disordered; that stretch reads GGGVGGQDGLGAPKDQQQQQQPQQQPPQQQQPPPQEEPGTPSSSPDDKL. The span at 84–96 shows a compositional bias: low complexity; that stretch reads QQQQQQPQQQPPQ. The BACK domain maps to 212–281; sequence VEDVLLLNFE…PAPELVERVQ (70 aa). Kelch repeat units lie at residues 325 to 374, 375 to 426, 427 to 473, 475 to 520, 522 to 572, and 574 to 622; these read MLLL…EVEN, FLFV…RLDK, HLYV…VHNG, IYIS…VMND, LYAI…VLDD, and IYLV…TVIL.

In terms of assembly, interacts with TOR1A. Expressed in the brain, primarily in neurons. In the cerebral cortex, mostly expressed in layers I and II (at protein level). Also observed in some neurons of the corpus striatum (at protein level). Expressed at high levels in the hippocampus, including in pyramidal cells of the CA1 and CA3 layers (at protein level). In the cerebellum, expression in Purkinje cells is higher than in granular cells (at protein level). Also detected in the medial septum, ventral pallidum, thalamus, hypothalamus, amygdala, inferior colliculi, locus caeruleus, peripyramidal nucleus, raphe nucleus, reticular formation, spinal trigeminal nucleus, and vestibular nuclei (at protein level). Low expression, if any, in glial cells (at protein level). Not observed in the corpus callosum.

The protein localises to the cytoplasm. It localises to the cytosol. The protein resides in the endoplasmic reticulum membrane. The polypeptide is Kelch-like protein 14 (Klhl14) (Mus musculus (Mouse)).